Here is a 145-residue protein sequence, read N- to C-terminus: Transcription antitermination protein NusB (145 aa).

Belongs to the NusB family.

Its function is as follows. Involved in transcription antitermination. Required for transcription of ribosomal RNA (rRNA) genes. Binds specifically to the boxA antiterminator sequence of the ribosomal RNA (rrn) operons. In Psychromonas ingrahamii (strain DSM 17664 / CCUG 51855 / 37), this protein is Transcription antitermination protein NusB.